A 128-amino-acid polypeptide reads, in one-letter code: Aspartate 1-decarboxylase (128 aa).

The active-site Schiff-base intermediate with substrate; via pyruvic acid is the Ser25. Ser25 carries the post-translational modification Pyruvic acid (Ser). Residue Thr57 coordinates substrate. The active-site Proton donor is the Tyr58. 73 to 75 lines the substrate pocket; that stretch reads GSA.

Belongs to the PanD family. Heterooctamer of four alpha and four beta subunits. Requires pyruvate as cofactor. In terms of processing, is synthesized initially as an inactive proenzyme, which is activated by self-cleavage at a specific serine bond to produce a beta-subunit with a hydroxyl group at its C-terminus and an alpha-subunit with a pyruvoyl group at its N-terminus.

It localises to the cytoplasm. It catalyses the reaction L-aspartate + H(+) = beta-alanine + CO2. It participates in cofactor biosynthesis; (R)-pantothenate biosynthesis; beta-alanine from L-aspartate: step 1/1. In terms of biological role, catalyzes the pyruvoyl-dependent decarboxylation of aspartate to produce beta-alanine. The sequence is that of Aspartate 1-decarboxylase from Burkholderia ambifaria (strain ATCC BAA-244 / DSM 16087 / CCUG 44356 / LMG 19182 / AMMD) (Burkholderia cepacia (strain AMMD)).